The primary structure comprises 433 residues: Tol-Pal system protein TolB (433 aa).

Residues 1–26 (MSLMTKLGFRALVASCLIAAGGAAHA) form the signal peptide.

Belongs to the TolB family. As to quaternary structure, the Tol-Pal system is composed of five core proteins: the inner membrane proteins TolA, TolQ and TolR, the periplasmic protein TolB and the outer membrane protein Pal. They form a network linking the inner and outer membranes and the peptidoglycan layer.

It is found in the periplasm. Its function is as follows. Part of the Tol-Pal system, which plays a role in outer membrane invagination during cell division and is important for maintaining outer membrane integrity. This is Tol-Pal system protein TolB from Burkholderia pseudomallei (strain 1710b).